The chain runs to 434 residues: Serine hydroxymethyltransferase (434 aa).

Residues Leu133 and 137–139 (GHL) contribute to the (6S)-5,6,7,8-tetrahydrofolate site. Residue Lys242 is modified to N6-(pyridoxal phosphate)lysine.

This sequence belongs to the SHMT family. As to quaternary structure, homodimer. It depends on pyridoxal 5'-phosphate as a cofactor.

It localises to the cytoplasm. It catalyses the reaction (6R)-5,10-methylene-5,6,7,8-tetrahydrofolate + glycine + H2O = (6S)-5,6,7,8-tetrahydrofolate + L-serine. It functions in the pathway one-carbon metabolism; tetrahydrofolate interconversion. It participates in amino-acid biosynthesis; glycine biosynthesis; glycine from L-serine: step 1/1. Functionally, catalyzes the reversible interconversion of serine and glycine with tetrahydrofolate (THF) serving as the one-carbon carrier. This reaction serves as the major source of one-carbon groups required for the biosynthesis of purines, thymidylate, methionine, and other important biomolecules. Also exhibits THF-independent aldolase activity toward beta-hydroxyamino acids, producing glycine and aldehydes, via a retro-aldol mechanism. The chain is Serine hydroxymethyltransferase from Caulobacter sp. (strain K31).